The primary structure comprises 621 residues: Cryptochrome-1 (621 aa).

A Photolyase/cryptochrome alpha/beta domain is found at 3-132 (VNAVHWFRKG…EVIVRISHTL (130 aa)). 3 short sequence motifs (LIR) span residues 50–54 (NRWRF), 82–87 (DVFPRL), and 151–156 (KRFQTL). Ser252 provides a ligand contact to FAD. 4 consecutive short sequence motifs (LIR) follow at residues 255–260 (LRFGCL), 271–276 (DLYKKV), 285–290 (SLYGQL), and 335–339 (TGFPW). An FAD-binding site is contributed by Gln289. His355 provides a ligand contact to FAD. An LIR 8 motif is present at residues 379 to 384 (KVFEEL). Residue 387 to 389 (DAD) coordinates FAD. 5 short sequence motifs (LIR) span residues 395 to 400 (GSWMWL), 411 to 416 (HCYCPV), 430 to 435 (RRYLPV), 486 to 491 (QIYQQL), and 492 to 497 (SRYRGL). The interval 581–621 (QSHLMQPGRASLGTGISAGKRPNPEEETQSVGPKVQRQSTN) is disordered.

This sequence belongs to the DNA photolyase class-1 family. Component of the circadian core oscillator, which includes the CRY proteins, CLOCK or NPAS2, BMAL1 or BMAL2, CSNK1E, and the PER proteins. FAD is required as a cofactor. The cofactor is (6R)-5,10-methylene-5,6,7,8-tetrahydrofolate. In terms of tissue distribution, expressed in the pineal gland.

Its subcellular location is the cytoplasm. It is found in the nucleus. Transcriptional repressor which forms a core component of the circadian clock. The circadian clock, an internal time-keeping system, regulates various physiological processes through the generation of approximately 24 hour circadian rhythms in gene expression, which are translated into rhythms in metabolism and behavior. It is derived from the Latin roots 'circa' (about) and 'diem' (day) and acts as an important regulator of a wide array of physiological functions including metabolism, sleep, body temperature, blood pressure, endocrine, immune, cardiovascular, and renal function. Consists of two major components: the central clock, residing in the suprachiasmatic nucleus (SCN) of the brain, and the peripheral clocks that are present in nearly every tissue and organ system. Both the central and peripheral clocks can be reset by environmental cues, also known as Zeitgebers (German for 'timegivers'). The predominant Zeitgeber for the central clock is light, which is sensed by retina and signals directly to the SCN. The central clock entrains the peripheral clocks through neuronal and hormonal signals, body temperature and feeding-related cues, aligning all clocks with the external light/dark cycle. Circadian rhythms allow an organism to achieve temporal homeostasis with its environment at the molecular level by regulating gene expression to create a peak of protein expression once every 24 hours to control when a particular physiological process is most active with respect to the solar day. Transcription and translation of core clock components (CLOCK, NPAS2, BMAL1, BMAL2, PER1, PER2, PER3, CRY1 and CRY2) plays a critical role in rhythm generation, whereas delays imposed by post-translational modifications (PTMs) are important for determining the period (tau) of the rhythms (tau refers to the period of a rhythm and is the length, in time, of one complete cycle). A diurnal rhythm is synchronized with the day/night cycle, while the ultradian and infradian rhythms have a period shorter and longer than 24 hours, respectively. Disruptions in the circadian rhythms contribute to the pathology of cardiovascular diseases, cancer, metabolic syndromes and aging. A transcription/translation feedback loop (TTFL) forms the core of the molecular circadian clock mechanism. Transcription factors, CLOCK or NPAS2 and BMAL1 or BMAL2, form the positive limb of the feedback loop, act in the form of a heterodimer and activate the transcription of core clock genes and clock-controlled genes (involved in key metabolic processes), harboring E-box elements (5'-CACGTG-3') within their promoters. The core clock genes: PER1/2/3 and CRY1/2 which are transcriptional repressors form the negative limb of the feedback loop and interact with the CLOCK|NPAS2-BMAL1|BMAL2 heterodimer inhibiting its activity and thereby negatively regulating their own expression. This heterodimer also activates nuclear receptors NR1D1/2 and RORA/B/G, which form a second feedback loop and which activate and repress BMAL1 transcription, respectively. CRY1 and CRY2 have redundant functions but also differential and selective contributions at least in defining the pace of the SCN circadian clock and its circadian transcriptional outputs. More potent transcriptional repressor in cerebellum and liver than CRY2, though more effective in lengthening the period of the SCN oscillator. On its side, CRY2 seems to play a critical role in tuning SCN circadian period by opposing the action of CRY1. With CRY2, is dispensable for circadian rhythm generation but necessary for the development of intercellular networks for rhythm synchrony. Capable of translocating circadian clock core proteins such as PER proteins to the nucleus. Interacts with CLOCK-BMAL1 independently of PER proteins and is found at CLOCK-BMAL1-bound sites, suggesting that CRY may act as a molecular gatekeeper to maintain CLOCK-BMAL1 in a poised and repressed state until the proper time for transcriptional activation. Represses CLOCK-BMAL1-mediated transcriptional activation. The sequence is that of Cryptochrome-1 (CRY1) from Gallus gallus (Chicken).